Here is a 65-residue protein sequence, read N- to C-terminus: Small ribosomal subunit protein eS17 (65 aa).

This sequence belongs to the eukaryotic ribosomal protein eS17 family.

This Methanobrevibacter smithii (strain ATCC 35061 / DSM 861 / OCM 144 / PS) protein is Small ribosomal subunit protein eS17.